Reading from the N-terminus, the 783-residue chain is MSCFSRTFLAASISAALFAPQIQAEASVDDNRAQLPNGEQCLVNQPEPTNPGQQPINVEADKLEAINGQKATYSGNVVVVQGKKRIAADNVTLHQQENVVVAEGNVQFSDGEIKTHSTKATNHLNTDEMTLENTRYQFLCEPGRGEAVYVSKTGKAVYEIEDGSITSCPDGDNAWRMRASSIDVDQNEEIATFYNPRLEVQNVPVFYLPYLTVPIGDTRKTGFLYPTASYGSRNGYSFEVPIYWNLAPQYDLETTFNYMQKRGTQLNSVFRYLTDFGAGQIKSEYLADDQLHTELGDRWAFQYEHNGIFQQAWKFEIDYSKVSDINYFSDLDSGVGNREDGQLIQEGRATYRSDNWDSALLVRDFQLLTKDTTSTNLPYRLMPQLSYNYYAPETMKYLDLDLVSHVSRFETDARGKPSATRVHIEPGLKIPFSNTWGNWTTEARVLGTYYQQDLDKTTDAKLEESVTRVIPEIRSVAGIVLERDTVLLDDYTQTLEPKIQYLYVPEKYQDNIGLYDSTLLQTDYYGLFRSRKYSGVDRIESANQVSYGASTRFFDSNYKERLNIAFGQIFYLDSKLNPSNKNPDSTSDKTSYSAWAVEMDFNFADYLFYHGGIQYDIDSQAVQLGNSTLEYRVASGYIQANYRYVAKDYIRNTVGDSITNIDDITRDGISQAGILAGYQLSRKWSASGQYYYDLTTDEALEWLANLTYTSDCWYVGFTYSNQLKSWNGNFVTDPYATPIYENNFSFNIGIIGFGTSIGAGSSMTGVDSAGNSLGYGRPFFLNN.

An N-terminal signal peptide occupies residues 1 to 24 (MSCFSRTFLAASISAALFAPQIQA).

The protein belongs to the LptD family. In terms of assembly, component of the lipopolysaccharide transport and assembly complex. Interacts with LptE and LptA.

The protein localises to the cell outer membrane. In terms of biological role, together with LptE, is involved in the assembly of lipopolysaccharide (LPS) at the surface of the outer membrane. In Vibrio cholerae serotype O1 (strain ATCC 39315 / El Tor Inaba N16961), this protein is LPS-assembly protein LptD.